The following is a 157-amino-acid chain: MRVGHGFDIHKFGKIYKPLILGGVHIPYCKGVVSHSDGDVIIHSIIDSLLGASSLGDIGILFPNNDIKYKNINSCILLQVVWNCIKKKYKIGNIDVTLFLEYPKISSYTNKICLCISNCLKCKTDVINIKSKTMEGLGEIGKKKGIASEAVSVLLEI.

Positions 8 and 10 each coordinate a divalent metal cation. Residues 8–10 and 35–36 contribute to the 4-CDP-2-C-methyl-D-erythritol 2-phosphate site; these read DIH and HS. Residue His43 coordinates a divalent metal cation. 4-CDP-2-C-methyl-D-erythritol 2-phosphate-binding positions include 57 to 59, 62 to 66, and Lys142; these read DIG and FPNND.

This sequence belongs to the IspF family. In terms of assembly, homotrimer. The cofactor is a divalent metal cation.

The enzyme catalyses 4-CDP-2-C-methyl-D-erythritol 2-phosphate = 2-C-methyl-D-erythritol 2,4-cyclic diphosphate + CMP. The protein operates within isoprenoid biosynthesis; isopentenyl diphosphate biosynthesis via DXP pathway; isopentenyl diphosphate from 1-deoxy-D-xylulose 5-phosphate: step 4/6. Involved in the biosynthesis of isopentenyl diphosphate (IPP) and dimethylallyl diphosphate (DMAPP), two major building blocks of isoprenoid compounds. Catalyzes the conversion of 4-diphosphocytidyl-2-C-methyl-D-erythritol 2-phosphate (CDP-ME2P) to 2-C-methyl-D-erythritol 2,4-cyclodiphosphate (ME-CPP) with a corresponding release of cytidine 5-monophosphate (CMP). The protein is 2-C-methyl-D-erythritol 2,4-cyclodiphosphate synthase of Wigglesworthia glossinidia brevipalpis.